The sequence spans 330 residues: Anthranilate phosphoribosyltransferase (330 aa).

5-phospho-alpha-D-ribose 1-diphosphate-binding positions include Gly-79, 82–83, Thr-87, 89–92, 107–115, and Ser-119; these read GD, NIST, and KHGNYGVSS. Residue Gly-79 coordinates anthranilate. Ser-91 provides a ligand contact to Mg(2+). An anthranilate-binding site is contributed by Asn-110. Arg-165 provides a ligand contact to anthranilate. Mg(2+)-binding residues include Asp-223 and Glu-224.

Belongs to the anthranilate phosphoribosyltransferase family. Homodimer. It depends on Mg(2+) as a cofactor.

The catalysed reaction is N-(5-phospho-beta-D-ribosyl)anthranilate + diphosphate = 5-phospho-alpha-D-ribose 1-diphosphate + anthranilate. The protein operates within amino-acid biosynthesis; L-tryptophan biosynthesis; L-tryptophan from chorismate: step 2/5. Catalyzes the transfer of the phosphoribosyl group of 5-phosphorylribose-1-pyrophosphate (PRPP) to anthranilate to yield N-(5'-phosphoribosyl)-anthranilate (PRA). This is Anthranilate phosphoribosyltransferase from Flavobacterium johnsoniae (strain ATCC 17061 / DSM 2064 / JCM 8514 / BCRC 14874 / CCUG 350202 / NBRC 14942 / NCIMB 11054 / UW101) (Cytophaga johnsonae).